Here is a 552-residue protein sequence, read N- to C-terminus: Hydroxylamine reductase (552 aa).

The [2Fe-2S] cluster site is built by C5, C8, C20, and C27. Hybrid [4Fe-2O-2S] cluster contacts are provided by H251, E275, C319, C407, C435, C460, E494, and K496. Cysteine persulfide is present on C407.

This sequence belongs to the HCP family. It depends on [2Fe-2S] cluster as a cofactor. Hybrid [4Fe-2O-2S] cluster serves as cofactor.

The protein localises to the cytoplasm. It carries out the reaction A + NH4(+) + H2O = hydroxylamine + AH2 + H(+). Functionally, catalyzes the reduction of hydroxylamine to form NH(3) and H(2)O. The protein is Hydroxylamine reductase of Shigella boydii serotype 4 (strain Sb227).